Consider the following 549-residue polypeptide: Oxygen-dependent choline dehydrogenase (549 aa).

Residue 4-33 coordinates FAD; that stretch reads DFVIIGSGSAGSAMAYRLSENGRYSVIVIE. Histidine 465 (proton acceptor) is an active-site residue.

This sequence belongs to the GMC oxidoreductase family. Requires FAD as cofactor.

The catalysed reaction is choline + A = betaine aldehyde + AH2. It catalyses the reaction betaine aldehyde + NAD(+) + H2O = glycine betaine + NADH + 2 H(+). Its pathway is amine and polyamine biosynthesis; betaine biosynthesis via choline pathway; betaine aldehyde from choline (cytochrome c reductase route): step 1/1. Its function is as follows. Involved in the biosynthesis of the osmoprotectant glycine betaine. Catalyzes the oxidation of choline to betaine aldehyde and betaine aldehyde to glycine betaine at the same rate. The sequence is that of Oxygen-dependent choline dehydrogenase from Brucella suis biovar 1 (strain 1330).